A 344-amino-acid polypeptide reads, in one-letter code: Arginine N-succinyltransferase (344 aa).

Position 125 (leucine 125) interacts with succinyl-CoA. Catalysis depends on histidine 229, which acts as the Proton donor.

It belongs to the arginine N-succinyltransferase family.

It catalyses the reaction succinyl-CoA + L-arginine = N(2)-succinyl-L-arginine + CoA + H(+). Its pathway is amino-acid degradation; L-arginine degradation via AST pathway; L-glutamate and succinate from L-arginine: step 1/5. Its function is as follows. Catalyzes the transfer of succinyl-CoA to arginine to produce N(2)-succinylarginine. This chain is Arginine N-succinyltransferase, found in Salmonella typhi.